Here is a 331-residue protein sequence, read N- to C-terminus: Glucan endo-1,3-beta-glucosidase, acidic isoform GL161 (331 aa).

Positions 1–9 are cleaved as a signal peptide; sequence MCSIQIIGA. Glutamine 10 carries the post-translational modification Pyrrolidone carboxylic acid. N-linked (GlcNAc...) asparagine glycosylation is found at asparagine 55 and asparagine 75. The active-site Nucleophile is the glutamate 244.

It belongs to the glycosyl hydrolase 17 family. As to expression, is expressed primarily in epidermal cell of healthy plant, and following induction by ethylene, accumulates in mesophyll cells.

The protein resides in the secreted. The protein localises to the extracellular space. The enzyme catalyses Hydrolysis of (1-&gt;3)-beta-D-glucosidic linkages in (1-&gt;3)-beta-D-glucans.. Functionally, is thought to be an important plant defense-related product against fungal pathogens. The protein is Glucan endo-1,3-beta-glucosidase, acidic isoform GL161 of Nicotiana tabacum (Common tobacco).